The primary structure comprises 198 residues: Nucleoid occlusion factor SlmA (198 aa).

Residues 10–70 enclose the HTH tetR-type domain; it reads NRREEILQSL…SLIEFIEDSL (61 aa). Positions 33-52 form a DNA-binding region, H-T-H motif; the sequence is TTAKLAASVGVSEAALYRHF. Residues 119–144 are a coiled coil; it reads DRLQGRINQLFERIEVQLRQVMREKK.

Belongs to the nucleoid occlusion factor SlmA family. In terms of assembly, homodimer. Interacts with FtsZ.

Its subcellular location is the cytoplasm. It localises to the nucleoid. Its function is as follows. Required for nucleoid occlusion (NO) phenomenon, which prevents Z-ring formation and cell division over the nucleoid. Acts as a DNA-associated cell division inhibitor that binds simultaneously chromosomal DNA and FtsZ, and disrupts the assembly of FtsZ polymers. SlmA-DNA-binding sequences (SBS) are dispersed on non-Ter regions of the chromosome, preventing FtsZ polymerization at these regions. In Klebsiella pneumoniae (strain 342), this protein is Nucleoid occlusion factor SlmA.